We begin with the raw amino-acid sequence, 218 residues long: Pyridoxine/pyridoxamine 5'-phosphate oxidase (218 aa).

Residues 14 to 17 and Lys-72 each bind substrate; that span reads RREY. FMN-binding positions include 67 to 72, 82 to 83, Arg-88, Lys-89, and Gln-111; these read RIVLLK and YT. The substrate site is built by Tyr-129, Arg-133, and Ser-137. FMN-binding positions include 146–147 and Trp-191; that span reads QS. 197–199 is a substrate binding site; that stretch reads RLH. Arg-201 lines the FMN pocket.

Belongs to the pyridoxamine 5'-phosphate oxidase family. In terms of assembly, homodimer. The cofactor is FMN.

The catalysed reaction is pyridoxamine 5'-phosphate + O2 + H2O = pyridoxal 5'-phosphate + H2O2 + NH4(+). The enzyme catalyses pyridoxine 5'-phosphate + O2 = pyridoxal 5'-phosphate + H2O2. The protein operates within cofactor metabolism; pyridoxal 5'-phosphate salvage; pyridoxal 5'-phosphate from pyridoxamine 5'-phosphate: step 1/1. It participates in cofactor metabolism; pyridoxal 5'-phosphate salvage; pyridoxal 5'-phosphate from pyridoxine 5'-phosphate: step 1/1. Catalyzes the oxidation of either pyridoxine 5'-phosphate (PNP) or pyridoxamine 5'-phosphate (PMP) into pyridoxal 5'-phosphate (PLP). The sequence is that of Pyridoxine/pyridoxamine 5'-phosphate oxidase from Escherichia coli O127:H6 (strain E2348/69 / EPEC).